The following is a 466-amino-acid chain: Soluble pyridine nucleotide transhydrogenase (466 aa).

36–45 (ERYHNVGGGC) lines the FAD pocket.

This sequence belongs to the class-I pyridine nucleotide-disulfide oxidoreductase family. Requires FAD as cofactor.

The protein localises to the cytoplasm. It catalyses the reaction NAD(+) + NADPH = NADH + NADP(+). Functionally, conversion of NADPH, generated by peripheral catabolic pathways, to NADH, which can enter the respiratory chain for energy generation. The protein is Soluble pyridine nucleotide transhydrogenase of Salmonella paratyphi C (strain RKS4594).